A 399-amino-acid chain; its full sequence is Phosphoglycerate kinase (399 aa).

Residues 21–23 (DFN), Arg36, 59–62 (HLGR), Arg120, and Arg158 each bind substrate. Residues Lys209, Gly297, Glu328, and 355–358 (GGDS) contribute to the ATP site.

Belongs to the phosphoglycerate kinase family. Monomer.

It is found in the cytoplasm. It carries out the reaction (2R)-3-phosphoglycerate + ATP = (2R)-3-phospho-glyceroyl phosphate + ADP. Its pathway is carbohydrate degradation; glycolysis; pyruvate from D-glyceraldehyde 3-phosphate: step 2/5. The protein is Phosphoglycerate kinase of Streptococcus suis (strain 05ZYH33).